Consider the following 77-residue polypeptide: Large ribosomal subunit protein uL29 (77 aa).

The protein belongs to the universal ribosomal protein uL29 family.

This Gluconobacter oxydans (strain 621H) (Gluconobacter suboxydans) protein is Large ribosomal subunit protein uL29.